The following is a 962-amino-acid chain: Protease 3 (962 aa).

The N-terminal stretch at 1–23 (MPRSTWFKALLLLVALWAPLSQA) is a signal peptide. Histidine 88 lines the Zn(2+) pocket. The active-site Proton acceptor is glutamate 91. The Zn(2+) site is built by histidine 92 and glutamate 169.

This sequence belongs to the peptidase M16 family. As to quaternary structure, monomer. The cofactor is Zn(2+).

Its subcellular location is the periplasm. It catalyses the reaction Preferential cleavage of 16-Tyr-|-Leu-17 and 25-Phe-|-Tyr-26 bonds of oxidized insulin B chain. Also acts on other substrates of Mw less than 7 kDa such as insulin and glucagon.. Endopeptidase that degrades small peptides of less than 7 kDa, such as glucagon and insulin. In Escherichia coli O157:H7, this protein is Protease 3 (ptrA).